The chain runs to 415 residues: G patch domain-containing protein 4 (415 aa).

M1 carries the N-acetylmethionine modification. T4 bears the Phosphothreonine mark. One can recognise a G-patch domain in the interval 11 to 57 (GMKFAEEQLLKHGWTQGKGLGRRENGITQALKVTLKQDNHGVGHDPA). K46 is covalently cross-linked (Glycyl lysine isopeptide (Lys-Gly) (interchain with G-Cter in SUMO2)). Phosphothreonine is present on T116. 2 disordered regions span residues 116-141 (TSGE…TPPK) and 191-415 (LGTS…VDLS). Over residues 118–141 (GEEKPDRDLGNCSDVDNHEPTPPK) the composition is skewed to basic and acidic residues. Residue S130 is modified to Phosphoserine. The span at 191 to 201 (LGTSQPLTDSE) shows a compositional bias: polar residues. The segment covering 224–239 (SLGDELLGHTDRSFRD) has biased composition (basic and acidic residues). S258 bears the Phosphoserine mark. Residues 335 to 345 (EDLDTQEEEGK) are compositionally biased toward acidic residues. Positions 353–364 (RKVRRKDKRKRQ) are enriched in basic residues. Basic and acidic residues predominate over residues 387 to 397 (AGERSRQYPKE). The segment covering 398–407 (RAKKKKRKRD) has biased composition (basic residues).

This Mus musculus (Mouse) protein is G patch domain-containing protein 4 (Gpatch4).